The sequence spans 528 residues: Ladinin-1 (528 aa).

Positions 1-404 are disordered; sequence MSVSRKDWSA…NSETPLTRSA (404 aa). Phosphoserine occurs at positions 38, 56, 62, 72, and 76. A compositionally biased stretch (basic residues) spans 88 to 97; that stretch reads RTRKERRQRR. At Ser119 the chain carries Phosphoserine. Residues 134–173 are compositionally biased toward basic and acidic residues; sequence KKVEALPRRRLSREQRGPWAQDEERLKNRELAEGEKRLPE. SEK repeat units follow at residues 184-186, 190-192, 202-204, and 208-210; these read SEK. A 6 X SEK repeats region spans residues 184 to 281; that stretch reads SEKTPVSEKT…MQERKLVSEK (98 aa). 2 stretches are compositionally biased toward basic and acidic residues: residues 218–231 and 267–279; these read SLTE…KLVP and IVSE…KLVS. 2 SEK repeats span residues 269 to 271 and 279 to 281; these read SEK. Residues 304–316 are compositionally biased toward polar residues; the sequence is EQPQTTGGSQATT. 5 positions are modified to phosphoserine: Ser328, Ser358, Ser367, Ser405, and Ser496. The span at 365–377 shows a compositional bias: low complexity; it reads TPSPTLLTYSSSL. Residues 492–528 form a disordered region; the sequence is KTQDSGDHGSQEVRKEASVTKRAQWGSKPSTSLDAEV. Residues 495 to 510 show a composition bias toward basic and acidic residues; the sequence is DSGDHGSQEVRKEASV. Over residues 518-528 the composition is skewed to polar residues; sequence SKPSTSLDAEV.

Expressed in kidney, lung and keratinocytes followed by liver, spleen and brain. Not expressed in testis, skeletal and heart muscle and in fibroblasts.

Its subcellular location is the secreted. It localises to the extracellular space. The protein localises to the extracellular matrix. It is found in the basement membrane. In terms of biological role, anchoring filament protein which is a component of the basement membrane zone. This is Ladinin-1 (Lad1) from Mus musculus (Mouse).